Consider the following 546-residue polypeptide: G1/S-specific cyclin CLN1 (546 aa).

The segment at 224-265 is disordered; that stretch reads SNGKEWSCKRKSQSSDDSDATVEEHISSSPQSTGLDGDTTTM.

It belongs to the cyclin family.

Functionally, essential for the control of the cell cycle at the G1/S (start) transition. Interacts with the CDC28 protein kinase to form MPF. In Saccharomyces cerevisiae (strain ATCC 204508 / S288c) (Baker's yeast), this protein is G1/S-specific cyclin CLN1 (CLN1).